Reading from the N-terminus, the 118-residue chain is Cell division protein FtsB (118 aa).

Residues 1-3 (MRL) lie on the Cytoplasmic side of the membrane. The chain crosses the membrane as a helical span at residues 4-21 (LFLVLLVLLGLIQYPLWL). Topologically, residues 22–118 (GKGGWFKVWD…PRPPATPPRR (97 aa)) are periplasmic. Residues 28–62 (KVWDLQRQVAEQRETNDGLRARNTALEAEVRDLAT) are a coiled coil. The tract at residues 88–118 (LPPGTPLPSGNSTPQASALSKPRPPATPPRR) is disordered. The segment covering 95 to 105 (PSGNSTPQASA) has biased composition (polar residues). Over residues 109–118 (PRPPATPPRR) the composition is skewed to pro residues.

Belongs to the FtsB family. In terms of assembly, part of a complex composed of FtsB, FtsL and FtsQ.

The protein resides in the cell inner membrane. Functionally, essential cell division protein. May link together the upstream cell division proteins, which are predominantly cytoplasmic, with the downstream cell division proteins, which are predominantly periplasmic. In Bordetella parapertussis (strain 12822 / ATCC BAA-587 / NCTC 13253), this protein is Cell division protein FtsB.